The following is an 870-amino-acid chain: Rho GTPase-activating protein 7 (870 aa).

Residues 18–125 (TVFKSGPLFI…WKTALEQALA (108 aa)) form the PH domain. Positions 167–367 (LALEDIDGSP…VLLEDYGSIF (201 aa)) constitute a Rho-GAP domain. Disordered regions lie at residues 378 to 432 (STES…SGCT) and 446 to 465 (DSDIESPRDTNGPRCNSNIR). The segment covering 407–417 (NEVEPVTDDDN) has biased composition (acidic residues). Positions 569–693 (GEDELAIQRL…HQLNQQRQTH (125 aa)) form a coiled coil. The tract at residues 736-793 (HEENVLGAEWRNSKGAGSFGVGNSRQPSRKQIPESTNTTDSKISEESGKISVDKLSSI) is disordered. Residues 777-787 (KISEESGKISV) are compositionally biased toward basic and acidic residues.

Acts as a GTPase activator for the Rac-type GTPase by converting it to an inactive GDP-bound state. This is Rho GTPase-activating protein 7 (ROPGAP7) from Arabidopsis thaliana (Mouse-ear cress).